A 171-amino-acid chain; its full sequence is MKKPTSAAGAKRPTKAHRKTREELNQEARDRKRVKKHSGHSAGSRANGSSASGSTAQNSKQKDPRIGSKTPIPLGVTDTPVVKQHKPKSEKPMLSPQAELDMLENDERLDALLERLEAGEKLNAEEQKWVDAKLDRIDELMQQLGLSYEDDEDDEEEEKQDDMMRLLKGGN.

Disordered regions lie at residues 1–99 (MKKP…PQAE) and 145–171 (GLSY…KGGN). The span at 20-30 (TREELNQEARD) shows a compositional bias: basic and acidic residues. Low complexity predominate over residues 40–59 (HSAGSRANGSSASGSTAQNS). The segment covering 148 to 160 (YEDDEDDEEEEKQ) has biased composition (acidic residues).

Belongs to the YihI family. In terms of assembly, interacts with Der.

A GTPase-activating protein (GAP) that modifies Der/EngA GTPase function. May play a role in ribosome biogenesis. The polypeptide is Der GTPase-activating protein YihI (Enterobacter sp. (strain 638)).